The primary structure comprises 116 residues: Iron-sulfur cluster insertion protein ErpA (116 aa).

Iron-sulfur cluster is bound by residues Cys-44, Cys-108, and Cys-110.

It belongs to the HesB/IscA family. As to quaternary structure, homodimer. Iron-sulfur cluster serves as cofactor.

In terms of biological role, required for insertion of 4Fe-4S clusters for at least IspG. The polypeptide is Iron-sulfur cluster insertion protein ErpA (Shewanella amazonensis (strain ATCC BAA-1098 / SB2B)).